A 547-amino-acid polypeptide reads, in one-letter code: Chaperonin GroEL (547 aa).

ATP contacts are provided by residues 30 to 33 (TLGP), lysine 51, 87 to 91 (DGTTT), glycine 415, 480 to 482 (NAA), and aspartate 496.

The protein belongs to the chaperonin (HSP60) family. As to quaternary structure, forms a cylinder of 14 subunits composed of two heptameric rings stacked back-to-back. Interacts with the co-chaperonin GroES.

It is found in the cytoplasm. The enzyme catalyses ATP + H2O + a folded polypeptide = ADP + phosphate + an unfolded polypeptide.. Together with its co-chaperonin GroES, plays an essential role in assisting protein folding. The GroEL-GroES system forms a nano-cage that allows encapsulation of the non-native substrate proteins and provides a physical environment optimized to promote and accelerate protein folding. In Glaesserella parasuis serovar 5 (strain SH0165) (Haemophilus parasuis), this protein is Chaperonin GroEL.